A 349-amino-acid chain; its full sequence is DNA replication and repair protein RecF (349 aa).

An ATP-binding site is contributed by 29-36; sequence GLNGVGKT.

It belongs to the RecF family.

The protein resides in the cytoplasm. Functionally, the RecF protein is involved in DNA metabolism; it is required for DNA replication and normal SOS inducibility. RecF binds preferentially to single-stranded, linear DNA. It also seems to bind ATP. The protein is DNA replication and repair protein RecF of Acholeplasma laidlawii (strain PG-8A).